The chain runs to 458 residues: NADH-ubiquinone oxidoreductase chain 4 (458 aa).

The next 12 helical transmembrane spans lie at 21–43, 58–78, 93–112, 116–138, 145–165, 196–216, 224–244, 257–277, 285–305, 309–329, 341–361, and 379–399; these read ASLW…QWLN, IDQI…LMLL, RTFI…AFSA, TLFY…RWGN, AGIY…VTIL, GLAL…HLWL, PIAG…YGIM, LSYP…SICL, LIAY…MIQT, FSGA…LFCL, ILLL…WWLL, and LTIM…TGLA.

This sequence belongs to the complex I subunit 4 family.

It localises to the mitochondrion membrane. The enzyme catalyses a ubiquinone + NADH + 5 H(+)(in) = a ubiquinol + NAD(+) + 4 H(+)(out). Its function is as follows. Core subunit of the mitochondrial membrane respiratory chain NADH dehydrogenase (Complex I) that is believed to belong to the minimal assembly required for catalysis. Complex I functions in the transfer of electrons from NADH to the respiratory chain. The immediate electron acceptor for the enzyme is believed to be ubiquinone. The protein is NADH-ubiquinone oxidoreductase chain 4 (MT-ND4) of Struthio camelus (Common ostrich).